A 102-amino-acid chain; its full sequence is Large ribosomal subunit protein uL24 (102 aa).

The protein belongs to the universal ribosomal protein uL24 family. As to quaternary structure, part of the 50S ribosomal subunit.

Functionally, one of two assembly initiator proteins, it binds directly to the 5'-end of the 23S rRNA, where it nucleates assembly of the 50S subunit. One of the proteins that surrounds the polypeptide exit tunnel on the outside of the subunit. The chain is Large ribosomal subunit protein uL24 from Rhizobium etli (strain CIAT 652).